The following is a 647-amino-acid chain: Leishmanolysin-like peptidase (647 aa).

His264 contributes to the Zn(2+) binding site. Glu265 is a catalytic residue. Zn(2+) is bound by residues His268 and His370.

The protein belongs to the peptidase M8 family. Zn(2+) is required as a cofactor. As to expression, expressed in all cell lines analyzed.

The protein resides in the cytoplasm. The protein localises to the lipid droplet. Its function is as follows. Metalloprotease. The polypeptide is Leishmanolysin-like peptidase (LMLN) (Homo sapiens (Human)).